The primary structure comprises 443 residues: Thymidine phosphorylase (443 aa).

This sequence belongs to the thymidine/pyrimidine-nucleoside phosphorylase family. In terms of assembly, homodimer.

It catalyses the reaction thymidine + phosphate = 2-deoxy-alpha-D-ribose 1-phosphate + thymine. It functions in the pathway pyrimidine metabolism; dTMP biosynthesis via salvage pathway; dTMP from thymine: step 1/2. The enzymes which catalyze the reversible phosphorolysis of pyrimidine nucleosides are involved in the degradation of these compounds and in their utilization as carbon and energy sources, or in the rescue of pyrimidine bases for nucleotide synthesis. This chain is Thymidine phosphorylase, found in Shewanella woodyi (strain ATCC 51908 / MS32).